Here is a 491-residue protein sequence, read N- to C-terminus: Malonate-semialdehyde dehydrogenase 1 (491 aa).

Positions 154, 156, 180, 183, 184, 233, and 255 each coordinate NAD(+). Cys288 functions as the Nucleophile in the catalytic mechanism. An NAD(+)-binding site is contributed by Glu386.

Belongs to the aldehyde dehydrogenase family. IolA subfamily. Homotetramer.

The catalysed reaction is 3-oxopropanoate + NAD(+) + CoA + H2O = hydrogencarbonate + acetyl-CoA + NADH + H(+). It carries out the reaction 2-methyl-3-oxopropanoate + NAD(+) + CoA + H2O = propanoyl-CoA + hydrogencarbonate + NADH + H(+). It participates in polyol metabolism; myo-inositol degradation into acetyl-CoA; acetyl-CoA from myo-inositol: step 7/7. In terms of biological role, catalyzes the oxidation of malonate semialdehyde (MSA) and methylmalonate semialdehyde (MMSA) into acetyl-CoA and propanoyl-CoA, respectively. Is involved in a myo-inositol catabolic pathway. Bicarbonate, and not CO2, is the end-product of the enzymatic reaction. This Shouchella clausii (strain KSM-K16) (Alkalihalobacillus clausii) protein is Malonate-semialdehyde dehydrogenase 1.